The following is a 258-amino-acid chain: Synapse differentiation-inducing gene protein 1-like (258 aa).

Residues 1–182 (MESLSELQNP…FIVIPPRDHL (182 aa)) are Extracellular-facing. The helical transmembrane segment at 183–203 (GLAIFSMLCCFWPLGIAAFYF) threads the bilayer. At 204 to 228 (SQGTSKAVTKGDFPLASIASRRALF) the chain is on the cytoplasmic side. A helical membrane pass occupies residues 229–249 (LAALSITIGTGVYVGVVVALI). Topologically, residues 250–258 (AYLSKPGHI) are extracellular.

It belongs to the CD225/Dispanin family.

Its subcellular location is the membrane. It is found in the golgi apparatus. It localises to the cis-Golgi network. The chain is Synapse differentiation-inducing gene protein 1-like (syndig1l) from Danio rerio (Zebrafish).